Reading from the N-terminus, the 420-residue chain is MTKDQQNIERGSVINVEILNAAHGGQGIAKYDGRVIFVKGAFPGDRLSANITHVKKKFARATIASIEMPSPLRMQQRCLAAANGAGCCDFGEFDPEIEGRYKADLVLEQLERLGKVSQPPTCEVVSFGSPTQWRTRMRLGVDAQGRAGGFASQSREVVSGVPCSQGVMGLLDGIVGAEQNVLRFTPGSQVVVVCDDLGQRTVVETQPAPRGKRTESMVKVVEGTGKVSQVVDGVTFELPATGFWQSHKDAAQAYADTIREWFGSLIIRNTDSSLVAWDLYGGCGSFASAILSAVDNHGVVHCVESAPAAVSAGKRALSQLVEDQKIVFHTETVERAMNQLPAPTLVVLDPPRVGAGAETVRAIAQSGPQAAIHIGCDPATFARDIAEWSRNGFILEKLRVFDAFPGTHHCETIGLLTKKN.

A TRAM domain is found at 7–65 (NIERGSVINVEILNAAHGGQGIAKYDGRVIFVKGAFPGDRLSANITHVKKKFARATIAS). Residues Gln-245, Tyr-280, Glu-304, and Asp-349 each contribute to the S-adenosyl-L-methionine site. Cys-376 serves as the catalytic Nucleophile.

This sequence belongs to the class I-like SAM-binding methyltransferase superfamily. RNA M5U methyltransferase family.

This is an uncharacterized protein from Corynebacterium diphtheriae (strain ATCC 700971 / NCTC 13129 / Biotype gravis).